The following is a 490-amino-acid chain: Protein twist (490 aa).

Disordered stretches follow at residues 48 to 72 (QLQH…QHAQ), 96 to 165 (PSNE…TGGS), and 244 to 264 (QQQQ…HAQM). A compositionally biased stretch (basic residues) spans 54–68 (QHLHSHQHHQQHHQQ). Low complexity-rich tracts occupy residues 102 to 134 (STSS…NPSG) and 244 to 263 (QQQQ…SHAQ). Residues Ser-325 and Ser-328 each carry the phosphoserine modification. The disordered stretch occupies residues 330–361 (LDGSDAGGKAFRKPRRRLKRKPSKTEETDEFS). A compositionally biased stretch (basic residues) spans 339–351 (AFRKPRRRLKRKP). The bHLH domain maps to 362–413 (NQRVMANVRERQRTQSLNDAFKSLQQIIPTLPSDKLSKIQTLKLATRYIDFL).

Efficient DNA binding requires dimerization with another bHLH protein. Homodimer. Interacts with akirin. In terms of tissue distribution, expressed in embryonic abdomen; a single cell ventrally, pairs of cells laterally and three cells dorsally in each hemisegment. In the thorax, there are patches of cells associated with the imaginal disks. During larval development, cells proliferate and, in the abdomen, they form ventral, lateral and dorsal clusters, which are the precursors of the adult abdominal muscles. In the thorax, they form populations of cells in the imaginal disks that correspond to the adepithelial cells.

It localises to the nucleus. Its function is as follows. Involved in the establishment and dorsoventral patterning of germ layers in the embryo. The polypeptide is Protein twist (twi) (Drosophila melanogaster (Fruit fly)).